The primary structure comprises 288 residues: Ras-like protein 1 (288 aa).

11 to 18 is a binding site for GTP; the sequence is GGGGVGKS. Residues 33 to 41 carry the Effector region motif; the sequence is YDPTIEDSY. GTP-binding positions include 58-62 and 117-120; these read DTAGQ and NKCD. The interval 176-288 is disordered; the sequence is EKQQQQQQQQ…KSKNGCCVIV (113 aa). Low complexity-rich tracts occupy residues 178 to 216 and 246 to 281; these read QQQQQQQQQNANQQGQDQYGQQKDNQQSQFNNQINNNNN and PNQSQSQRQQQQQQQEPQQQSENQFSGQKQSSSKSK. Cys284 carries S-palmitoyl cysteine lipidation. Cys285 is modified (cysteine methyl ester). Cys285 is lipidated: S-farnesyl cysteine. A propeptide spans 286 to 288 (removed in mature form); sequence VIV.

Belongs to the small GTPase superfamily. Ras family.

Its subcellular location is the cell membrane. The enzyme catalyses GTP + H2O = GDP + phosphate + H(+). Alternates between an inactive form bound to GDP and an active form bound to GTP. Activated by a guanine nucleotide-exchange factor (GEF) and inactivated by a GTPase-activating protein (GAP). Functionally, required for the regulation of both a MAP kinase signaling pathway and a cAMP signaling pathway. The activation of these pathways contributes to the pathogenicity of the cells through the induction of the morphological transition from the yeast to the polarized filamentous form. The protein is Ras-like protein 1 (RAS1) of Candida albicans (strain WO-1) (Yeast).